The primary structure comprises 61 residues: Fasciculin-2 (61 aa).

Disulfide bonds link Cys3/Cys22, Cys17/Cys39, Cys41/Cys52, and Cys53/Cys59.

The protein belongs to the three-finger toxin family. Short-chain subfamily. Acn-esterase inhibitor sub-subfamily. In terms of tissue distribution, expressed by the venom gland.

The protein localises to the secreted. Functionally, interferes with neuromuscular transmission by inhibiting the enzyme acetylcholinesterase (AChE) present at the neuromuscular junction. It selectively binds and inhibits with a 1:1 stoichiometry the mammalian and electric fish AChE at picomolar concentrations. It is highly specific for the peripheral site of AChE and blocks the entry of acetylcholine into the active site of the enzyme (through the Met-33 residue), thereby preventing its breakdown. It has been called fasciculin since after injection into mice it causes severe, generalized and long-lasting (5-7 hours) fasciculations. This chain is Fasciculin-2, found in Dendroaspis angusticeps (Eastern green mamba).